A 124-amino-acid chain; its full sequence is MaFF-interacting protein (124 aa).

Positions 54 to 96 form a coiled coil; that stretch reads LVSEVEELYKSITALREKLLQAEQSLRNLKDIHMSLEKDVTAM.

The protein belongs to the tektin family. As to quaternary structure, interacts with MIS18A. Interacts (via its coiled-coil region) with MAFF. As to expression, strongly expressed in brain, kidney and ovary. Moderately expressed in liver, spleen, thymus, prostate, testis, small intestine and colon. Weakly expressed in heart, placenta, lung and leukocytes.

Its subcellular location is the cytoplasm. It is found in the nucleus. The protein localises to the nucleolus. Acts as a coactivator of MAFF transcriptional activity. Inhibits cell growth and colony-forming efficiency. The polypeptide is MaFF-interacting protein (MAFIP) (Homo sapiens (Human)).